The primary structure comprises 93 residues: Putative pterin-4-alpha-carbinolamine dehydratase (93 aa).

This sequence belongs to the pterin-4-alpha-carbinolamine dehydratase family.

The enzyme catalyses (4aS,6R)-4a-hydroxy-L-erythro-5,6,7,8-tetrahydrobiopterin = (6R)-L-erythro-6,7-dihydrobiopterin + H2O. This chain is Putative pterin-4-alpha-carbinolamine dehydratase, found in Sulfurisphaera tokodaii (strain DSM 16993 / JCM 10545 / NBRC 100140 / 7) (Sulfolobus tokodaii).